Here is a 709-residue protein sequence, read N- to C-terminus: MNPIVKQFKYGQHTVTLETGAIARQATAAVMASMDDTTVFVTVVAKKDVKEGQDFFPLTVNYQERTYAAGKIPGGFFKREGRPSEGETLIARLIDRPIRPLFPEGFFNEIQVVATVVSVNPQISPDLVAMIGASAALTLSGVPFNGPIGAVRVGFIDNQFVLNPTMAEQKQSRLDLVVAGTDKAVLMVESEADILTEEQMLAAVVFGHQQQQVVIEAIKEFAKEAGKPRWDWVAPQPNTDLINKVKAIAEARLGDAYRITEKQLRYEQIDAIKADVIAQITAEDEEINEGKIVDIFTALESQIVRGRIIAGEPRIDGRTVDTVRALDICTGVLPRTHGSAIFTRGETQALAVATLGTERDAQIIDELTGERQDHFLFHYNFPPYSVGETGMIGSPKRREIGHGRLAKRGVAAVMPSLAEFPYVVRVVSEITESNGSSSMASVCGASLALMDAGVPIKAAVAGIAMGLVKEEEKFVVLSDILGDEDHLGDMDFKVAGTREGVTALQMDIKIEGITPEIMQIALNQAKSARMHILGVMEQAIPAPRADISDYAPRIYTMKIDPKKIKDVIGKGGATIRSLTEETGTSIDIDDDGTVKIAAVDSNAAKNVMGRIEEIVAEVEAGAIYKGKVTRLADFGAFVAIVGNKEGLVHISQIAEERVEKVSDYLQVGQEVNVKVVEIDRQGRIRLTMKDLAPKQETEINQEDSVEEQE.

Mg(2+) is bound by residues D485 and D491. Residues 552-611 form the KH domain; the sequence is PRIYTMKIDPKKIKDVIGKGGATIRSLTEETGTSIDIDDDGTVKIAAVDSNAAKNVMGRI. The 69-residue stretch at 621–689 folds into the S1 motif domain; that stretch reads GAIYKGKVTR…RQGRIRLTMK (69 aa).

The protein belongs to the polyribonucleotide nucleotidyltransferase family. In terms of assembly, component of the RNA degradosome, which is a multiprotein complex involved in RNA processing and mRNA degradation. Mg(2+) serves as cofactor.

It localises to the cytoplasm. The catalysed reaction is RNA(n+1) + phosphate = RNA(n) + a ribonucleoside 5'-diphosphate. Functionally, involved in mRNA degradation. Catalyzes the phosphorolysis of single-stranded polyribonucleotides processively in the 3'- to 5'-direction. This Haemophilus influenzae (strain PittGG) protein is Polyribonucleotide nucleotidyltransferase.